A 282-amino-acid chain; its full sequence is MFSFIMKAAILLILVGCISFCISSEPLNESEITFEREERSLADPAGRQKRQSGLSCPKRISHSPEYPRDCYDILQSCSGQSPPSGQYYIQPDGGNLIKVYCDMETDEGGWTVFQRRIDGTINFYRSWSYYQTGFGNLNTEFWLGNDNIHYLTSQGDYELRVELNNTLGNHYYAKYNKFRIGDSFSEYLLVLGAYSGTAGDSLAYHNTMRFSTYDNDNDVYSINCASHSSYGRGAWWYKSCLLSNLNGQYYDYSGAPSIYWSYLPGDNDQIPFAEMKLRNRSI.

The signal sequence occupies residues 1 to 24; the sequence is MFSFIMKAAILLILVGCISFCISS. One can recognise a Fibrinogen C-terminal domain in the interval 61–281; that stretch reads SHSPEYPRDC…FAEMKLRNRS (221 aa). 2 cysteine pairs are disulfide-bonded: cysteine 70–cysteine 101 and cysteine 224–cysteine 240.

The protein is Fibrinogen-like protein A of Apostichopus parvimensis (Warty sea cucumber).